The chain runs to 473 residues: Chromosomal replication initiator protein DnaA (473 aa).

The tract at residues Met1–Gln73 is domain I, interacts with DnaA modulators. The domain II stretch occupies residues Gln73–Ser129. A domain III, AAA+ region region spans residues Pro130 to Ser352. Residues Gly177, Gly179, Lys180, and Thr181 each coordinate ATP. A domain IV, binds dsDNA region spans residues Lys353–Glu473.

It belongs to the DnaA family. Oligomerizes as a right-handed, spiral filament on DNA at oriC.

It is found in the cytoplasm. In terms of biological role, plays an essential role in the initiation and regulation of chromosomal replication. ATP-DnaA binds to the origin of replication (oriC) to initiate formation of the DNA replication initiation complex once per cell cycle. Binds the DnaA box (a 9 base pair repeat at the origin) and separates the double-stranded (ds)DNA. Forms a right-handed helical filament on oriC DNA; dsDNA binds to the exterior of the filament while single-stranded (ss)DNA is stabiized in the filament's interior. The ATP-DnaA-oriC complex binds and stabilizes one strand of the AT-rich DNA unwinding element (DUE), permitting loading of DNA polymerase. After initiation quickly degrades to an ADP-DnaA complex that is not apt for DNA replication. Binds acidic phospholipids. This Rhodopseudomonas palustris (strain BisB18) protein is Chromosomal replication initiator protein DnaA.